We begin with the raw amino-acid sequence, 572 residues long: Putative acyl-CoA synthetase CCNA_01223 (572 aa).

Belongs to the ATP-dependent AMP-binding enzyme family.

It participates in lipid metabolism; sphingolipid metabolism. Functionally, involved in de novo bacterial ceramide synthesis. The chain is Putative acyl-CoA synthetase CCNA_01223 from Caulobacter vibrioides (strain NA1000 / CB15N) (Caulobacter crescentus).